The primary structure comprises 554 residues: Glucose-6-phosphate isomerase (554 aa).

The active-site Proton donor is E359. Catalysis depends on residues H390 and K518.

The protein belongs to the GPI family.

Its subcellular location is the cytoplasm. The enzyme catalyses alpha-D-glucose 6-phosphate = beta-D-fructose 6-phosphate. The protein operates within carbohydrate biosynthesis; gluconeogenesis. It participates in carbohydrate degradation; glycolysis; D-glyceraldehyde 3-phosphate and glycerone phosphate from D-glucose: step 2/4. Catalyzes the reversible isomerization of glucose-6-phosphate to fructose-6-phosphate. The protein is Glucose-6-phosphate isomerase of Pseudomonas syringae pv. syringae (strain B728a).